Here is a 310-residue protein sequence, read N- to C-terminus: Putative S-adenosyl-L-methionine-dependent methyltransferase Mb0151 (310 aa).

S-adenosyl-L-methionine contacts are provided by residues D132 and 161 to 162 (DL).

It belongs to the UPF0677 family.

In terms of biological role, exhibits S-adenosyl-L-methionine-dependent methyltransferase activity. The sequence is that of Putative S-adenosyl-L-methionine-dependent methyltransferase Mb0151 from Mycobacterium bovis (strain ATCC BAA-935 / AF2122/97).